We begin with the raw amino-acid sequence, 416 residues long: Transcription factor IIIB 50 kDa subunit (416 aa).

The segment at 3 to 36 (NGSRCPDCGSSELVEDSHYSQSQLVCSDCGCVVT) adopts a TFIIB-type zinc-finger fold. The Zn(2+) site is built by C7, C10, C28, and C31. 2 consecutive repeat copies span residues 72 to 157 (DLRR…MQIV) and 173 to 249 (VKSY…SLAR). Residues 108-114 (AARLQKK) form an interaction with target DNA region. Residues 317–385 (AEVETKQQQP…TGDEDISDSE (69 aa)) are disordered. S350 is modified (phosphoserine). The segment at 354–360 (LLPPCML) is required for the formation of a ternary complex with DNA and TBP; not required for interaction with TBP in the absence of DNA. Position 358 is a cysteine sulfenic acid (-SOH) (C358). Residues 362–416 (PPKRTHTMPPDSVVTGDEDISDSEIEQYLRTPQEVRDFERAQAASRAAMSVPNPP) form a required for interaction with TBP and formation of a ternary complex with DNA and TBP region.

Belongs to the TFIIB family. In terms of assembly, component of TFIIIB complexes. The TFIIIB complex has two activities, alpha and beta. The TFIIIB-alpha activity complex is composed of TBP, BDP1, and a complex containing both BRF2 and at least four stably associated proteins; this complex inhibits the transcription by pol III via its phosphorylation by CK2; YY1 facilitates the TFIIIB-alpha complex formation. Interacts with TBP; this interaction promotes recruitment of BRF2 to TATA box-containing promoters. Interacts with TBP and the BURE sequence (GC-rich sequence downstream from the TATA box) to form a strong ternary complex which is joined by BDP1; this ternary complex stimulates pol III transcription. Forms a trimeric complex composed of TBP, BRF2 and mini-SNAPc complex (SNAP43, SNAP50, and the N-terminal third of SNAP190) on the promoter. Assembly of the TBP-BRF2 complex is stimulated by SNAP190. Interacts with MAF1 and SNAPC4. Post-translationally, in response to oxidative stress, Cys-358 is reversibly oxidized to cysteine sulfenic acid. Oxidation of Cys-358 impairs formation of a ternary complex with TBP and DNA and down-regulates expression of target genes in response to oxidative stress.

It is found in the nucleus. Its function is as follows. General activator of RNA polymerase III transcription. Factor exclusively required for RNA polymerase III transcription of genes with promoter elements upstream of the initiation sites. Contributes to the regulation of gene expression; functions as activator in the absence of oxidative stress. Down-regulates expression of target genes in response to oxidative stress. Overexpression protects cells against apoptosis in response to oxidative stress. The chain is Transcription factor IIIB 50 kDa subunit (Brf2) from Rattus norvegicus (Rat).